Consider the following 204-residue polypeptide: MAEAEVKAQPEGDAAPQSKALLFNKWDVSEVKVTDPSLVRYVNLTPQIIPHSCGKFSRQEFNKANMMIVERLINRLMQTENNTGKKQLAIGIVRDAFELINKKTKRNPIEVLVEAIGNTGPREETVRLKYGGINVPKSVDTAPLRRVDSAIGFIAEAVWKSSRKSKKPASAILADELIAASKGDAKCYSVGKKEEKERIAKSAR.

The protein belongs to the universal ribosomal protein uS7 family. As to quaternary structure, part of the 30S ribosomal subunit.

Functionally, one of the primary rRNA binding proteins, it binds directly to 16S rRNA where it nucleates assembly of the head domain of the 30S subunit. Is located at the subunit interface close to the decoding center. This chain is Small ribosomal subunit protein uS7, found in Methanoregula boonei (strain DSM 21154 / JCM 14090 / 6A8).